The following is a 104-amino-acid chain: Circadian clock oscillator protein KaiB (104 aa).

Belongs to the KaiB family. In terms of assembly, the KaiABC complex composition changes during the circadian cycle to control KaiC phosphorylation. Complexes KaiC(6), KaiA(2-4):KaiC(6), KaiB(6):KaiC(6) and KaiC(6):KaiB(6):KaiA(12) are among the most important forms, many form cooperatively. Undergoes a major conformational rearrangment; in the free state forms homotetramers as a dimer of dimers. When bound to the CI domain of KaiC switches to a monomeric thioredoxin-fold (KaiB(fs)). KaiB(fs) binds CikA, leading it to dephosphorylate phospho-RpaA.

Its function is as follows. Key component of the KaiABC oscillator complex, which constitutes the main circadian regulator in cyanobacteria. Complex composition changes during the circadian cycle to control KaiC phosphorylation. KaiA stimulates KaiC autophosphorylation, while KaiB sequesters KaiA, leading to KaiC autodephosphorylation. Phospho-Ser-431 KaiC accumulation triggers binding of KaiB to form the KaiB(6):KaiC(6) complex, leading to changes in output regulators CikA and SasA. KaiB switches to a thioredoxin-like fold (KaiB(fs)) when bound to KaiC. KaiB(6):KaiC(6) formation exposes a site for KaiA binding that sequesters KaiA from KaiC, making the KaiC(6):KaiB(6):KaiA(12) complex that results in KaiC autodephosphorylation. Functionally, a metamorphic protein which reversibly switches between an inactive tetrameric fold and a rare, thioredoxin-like monomeric fold (KaiB(fs)). KaiB(fs) binds phospho-KaiC, KaiA and CikA. KaiA and CikA compete for binding to KaiB(fs), and KaiB(fs) and SasA compete for binding to KaiC, thus the clock oscillator and output signal pathway are tightly coupled. This chain is Circadian clock oscillator protein KaiB, found in Rippkaea orientalis (strain PCC 8801 / RF-1) (Cyanothece sp. (strain PCC 8801)).